A 189-amino-acid chain; its full sequence is 3-isopropylmalate dehydratase small subunit (189 aa).

Belongs to the LeuD family. LeuD type 1 subfamily. Heterodimer of LeuC and LeuD.

It carries out the reaction (2R,3S)-3-isopropylmalate = (2S)-2-isopropylmalate. The protein operates within amino-acid biosynthesis; L-leucine biosynthesis; L-leucine from 3-methyl-2-oxobutanoate: step 2/4. Catalyzes the isomerization between 2-isopropylmalate and 3-isopropylmalate, via the formation of 2-isopropylmaleate. The chain is 3-isopropylmalate dehydratase small subunit from Staphylococcus epidermidis (strain ATCC 35984 / DSM 28319 / BCRC 17069 / CCUG 31568 / BM 3577 / RP62A).